The sequence spans 111 residues: Antirepressor protein CarS (111 aa).

In terms of assembly, monomer. Interacts with CarA and CarH.

Functionally, involved in carotenoid biosynthesis. Antagonizes the transcriptional repressor proteins CarA and CarH by preventing their binding to DNA. Can also dissociate preformed CarA-DNA complexes. Does not bind DNA. The polypeptide is Antirepressor protein CarS (carS) (Myxococcus xanthus).